The primary structure comprises 952 residues: Glycine dehydrogenase (decarboxylating) (952 aa).

Position 703 is an N6-(pyridoxal phosphate)lysine (lysine 703).

This sequence belongs to the GcvP family. The glycine cleavage system is composed of four proteins: P, T, L and H. The cofactor is pyridoxal 5'-phosphate.

The catalysed reaction is N(6)-[(R)-lipoyl]-L-lysyl-[glycine-cleavage complex H protein] + glycine + H(+) = N(6)-[(R)-S(8)-aminomethyldihydrolipoyl]-L-lysyl-[glycine-cleavage complex H protein] + CO2. The glycine cleavage system catalyzes the degradation of glycine. The P protein binds the alpha-amino group of glycine through its pyridoxal phosphate cofactor; CO(2) is released and the remaining methylamine moiety is then transferred to the lipoamide cofactor of the H protein. This is Glycine dehydrogenase (decarboxylating) from Mycobacterium leprae (strain Br4923).